We begin with the raw amino-acid sequence, 125 residues long: Large ribosomal subunit protein bL17 (125 aa).

Belongs to the bacterial ribosomal protein bL17 family. As to quaternary structure, part of the 50S ribosomal subunit. Contacts protein L32.

This Blochmanniella floridana protein is Large ribosomal subunit protein bL17.